Consider the following 648-residue polypeptide: Replication restart protein PriA (648 aa).

Residues 131–297 (TILNESNKPT…EIGKYQLVTL (167 aa)) form the Helicase ATP-binding domain. ATP is bound at residue 144–151 (GVTGSGKT). Positions 240–243 (DEEH) match the DEAH box motif. 8 residues coordinate Zn(2+): Cys358, Cys361, Cys367, Cys370, Cys385, Cys388, Cys398, and Cys401. The region spanning 393–548 (KIFSSCPECL…SFFANELEIR (156 aa)) is the Helicase C-terminal domain.

It belongs to the helicase family. PriA subfamily. In terms of assembly, component of the replication restart primosome. Zn(2+) is required as a cofactor.

The catalysed reaction is Couples ATP hydrolysis with the unwinding of duplex DNA by translocating in the 3'-5' direction.. It carries out the reaction ATP + H2O = ADP + phosphate + H(+). Its function is as follows. Initiates the restart of stalled replication forks, which reloads the replicative helicase on sites other than the origin of replication. Recognizes and binds to abandoned replication forks and remodels them to uncover a helicase loading site. Promotes assembly of the primosome at these replication forks. This is Replication restart protein PriA from Rickettsia conorii (strain ATCC VR-613 / Malish 7).